A 144-amino-acid chain; its full sequence is Putative acetyltransferase SAOUHSC_00995 (144 aa).

One can recognise an N-acetyltransferase domain in the interval 1–141 (MFSKVNNQKM…EHIEMTKKLT (141 aa)). CoA contacts are provided by residues 71–73 (VAV), G79, and 112–114 (PFY).

It belongs to the UPF0039 (ElaA) family.

Could catalyze the transfer of an acetyl group from acetyl coenzyme A (AcCoA) to an acceptor substrate and release both CoA and the acetylated product. The protein is Putative acetyltransferase SAOUHSC_00995 of Staphylococcus aureus (strain NCTC 8325 / PS 47).